Consider the following 153-residue polypeptide: Probable Brix domain-containing ribosomal biogenesis protein (153 aa).

A Brix domain is found at 1–153; that stretch reads MQVLTTSRKP…RILKISRSSR (153 aa).

Its function is as follows. Probably involved in the biogenesis of the ribosome. In Archaeoglobus fulgidus (strain ATCC 49558 / DSM 4304 / JCM 9628 / NBRC 100126 / VC-16), this protein is Probable Brix domain-containing ribosomal biogenesis protein.